A 245-amino-acid polypeptide reads, in one-letter code: Probable phosphatase YcdX (245 aa).

9 residues coordinate Zn(2+): histidine 7, histidine 9, histidine 15, histidine 40, glutamate 73, histidine 101, histidine 131, aspartate 192, and histidine 194.

This sequence belongs to the PHP family. As to quaternary structure, homotrimer. Zn(2+) serves as cofactor.

The sequence is that of Probable phosphatase YcdX from Salmonella arizonae (strain ATCC BAA-731 / CDC346-86 / RSK2980).